The chain runs to 229 residues: Uracil-DNA glycosylase (229 aa).

The active-site Proton acceptor is aspartate 64.

Belongs to the uracil-DNA glycosylase (UDG) superfamily. UNG family.

It localises to the cytoplasm. It carries out the reaction Hydrolyzes single-stranded DNA or mismatched double-stranded DNA and polynucleotides, releasing free uracil.. Excises uracil residues from the DNA which can arise as a result of misincorporation of dUMP residues by DNA polymerase or due to deamination of cytosine. In Salmonella arizonae (strain ATCC BAA-731 / CDC346-86 / RSK2980), this protein is Uracil-DNA glycosylase.